The chain runs to 345 residues: Biotin synthase (345 aa).

Residues 67 to 295 (YKVQLASLLS…KSRIRLSAGR (229 aa)) enclose the Radical SAM core domain. Residues C82, C86, and C89 each coordinate [4Fe-4S] cluster. 4 residues coordinate [2Fe-2S] cluster: C126, C158, C218, and R290.

Belongs to the radical SAM superfamily. Biotin synthase family. Homodimer. The cofactor is [4Fe-4S] cluster. [2Fe-2S] cluster is required as a cofactor.

It catalyses the reaction (4R,5S)-dethiobiotin + (sulfur carrier)-SH + 2 reduced [2Fe-2S]-[ferredoxin] + 2 S-adenosyl-L-methionine = (sulfur carrier)-H + biotin + 2 5'-deoxyadenosine + 2 L-methionine + 2 oxidized [2Fe-2S]-[ferredoxin]. It participates in cofactor biosynthesis; biotin biosynthesis; biotin from 7,8-diaminononanoate: step 2/2. Its function is as follows. Catalyzes the conversion of dethiobiotin (DTB) to biotin by the insertion of a sulfur atom into dethiobiotin via a radical-based mechanism. The protein is Biotin synthase of Prochlorococcus marinus (strain NATL1A).